A 182-amino-acid polypeptide reads, in one-letter code: Large ribosomal subunit protein uL5 (182 aa).

Belongs to the universal ribosomal protein uL5 family. Part of the 50S ribosomal subunit; part of the 5S rRNA/L5/L18/L25 subcomplex. Contacts the 5S rRNA and the P site tRNA. Forms a bridge to the 30S subunit in the 70S ribosome.

This is one of the proteins that bind and probably mediate the attachment of the 5S RNA into the large ribosomal subunit, where it forms part of the central protuberance. In the 70S ribosome it contacts protein S13 of the 30S subunit (bridge B1b), connecting the 2 subunits; this bridge is implicated in subunit movement. Contacts the P site tRNA; the 5S rRNA and some of its associated proteins might help stabilize positioning of ribosome-bound tRNAs. The chain is Large ribosomal subunit protein uL5 from Trichormus variabilis (strain ATCC 29413 / PCC 7937) (Anabaena variabilis).